Reading from the N-terminus, the 198-residue chain is V-type proton ATPase subunit E (198 aa).

Belongs to the V-ATPase E subunit family.

Produces ATP from ADP in the presence of a proton gradient across the membrane. This chain is V-type proton ATPase subunit E, found in Borrelia duttonii (strain Ly).